Here is a 709-residue protein sequence, read N- to C-terminus: MAETLEFNDIFQEVKGSMNDGRLRLSRQGIIFKNSKTGKVDNIQAGELTEGIWRRVALGHGLKLLTKNGHVYKYDGFRESEFEKLSDFFKTHYRLELMEKDLCVKGWNWGTVKFGGQLLSFDIGDQPVFEIPLSNVSQCTTGKNEVTLEFHQNDDAEVSLMEVRFYVPPTQEDGVDPVEAFAQNVLSKADVIQATGDAICIFRELQCLTPRGRYDIRIYPTFLHLHGKTFDYKIPYTTVLRLFLLPHKDQRQMFFVISLDPPIKQGQTRYHFLILLFSKDEDISLTLNMNEEEVEKRFEGRLTKNMSGSLYEMVSRVMKALVNRKITVPGNFQGHSGAQCITCSYKASSGLLYPLERGFIYVHKPPVHIRFDEISFVNFARGTTTTRSFDFEIETKQGTQYTFSSIEREEYGKLFDFVNAKKLNIKNRGLKEGINPGYDDYADSDEDQHDAYLERMKEEGKIREENANDSSDDSGEETDESFNPGEEEEDVAEEFDSNASASSSSNEGDSDREEKKRKQLKRAKMAKDRKSRKKSSEGKKGKDPNAPKRPMSAYMLWLNASREKIKSDHPGISITDLSKKAGEIWKGMSKEKKEEWDRKAEDARREYEKAMKEYEGGRGDSSKRDKSKKKKKVKAKLEKKSTPSRGSSSKSSSRQLSDSFKSKEFVSSDESSSGENKSKKKRRRSEDSDEEELASTPPSSEDSASGSDE.

N-acetylalanine is present on Ala2. Lys90 participates in a covalent cross-link: Glycyl lysine isopeptide (Lys-Gly) (interchain with G-Cter in SUMO2). Phosphothreonine is present on Thr170. An N6-acetyllysine modification is found at Lys233. Residues Lys296 and Lys364 each participate in a glycyl lysine isopeptide (Lys-Gly) (interchain with G-Cter in SUMO2) cross-link. An N6-acetyllysine modification is found at Lys413. The residue at position 441 (Tyr441) is a Phosphotyrosine. Ser444 carries the phosphoserine modification. Tyr452 bears the Phosphotyrosine mark. Residues 458-709 (EEGKIREENA…SEDSASGSDE (252 aa)) form a disordered region. Residues 470 to 496 (SSDDSGEETDESFNPGEEEEDVAEEFD) are compositionally biased toward acidic residues. Ser471 is modified (phosphoserine). Residues 497–507 (SNASASSSSNE) show a composition bias toward low complexity. Phosphoserine; by CK2 is present on Ser510. A compositionally biased stretch (basic residues) spans 515-533 (KKRKQLKRAKMAKDRKSRK). Composition is skewed to basic and acidic residues over residues 534-546 (KSSEGKKGKDPNA) and 577-624 (LSKK…SSKR). The residue at position 542 (Lys542) is an N6-acetyllysine. A DNA-binding region (HMG box) is located at residues 547–615 (PKRPMSAYML…EYEKAMKEYE (69 aa)). The segment covering 625-634 (DKSKKKKKVK) has biased composition (basic residues). A compositionally biased stretch (low complexity) spans 643 to 659 (PSRGSSSKSSSRQLSDS). Ser657 carries the phosphoserine; by CK2 modification. Residues Ser659, Ser667, Ser668, Ser671, Ser672, and Ser673 each carry the phosphoserine modification. Position 688 is a phosphoserine; by CK2 (Ser688). Positions 696–709 (TPPSSEDSASGSDE) are enriched in polar residues.

It belongs to the SSRP1 family. Interacts with MYOG (via C-terminal region). Component of the FACT complex, a stable heterodimer of SSRP1 and SUPT16H. Also a component of a CK2-SPT16-SSRP1 complex which forms following UV irradiation, composed of SSRP1, SUPT16H, CSNK2A1, CSNK2A2 and CSNK2B. Binds to histone H3-H4 tetramers, but not to intact nucleosomes. Identified in a centromere complex containing histones H2A, H2B and H4, and at least CENPA, CENPB, CENPC, CENPT, CENPN, HJURP, SUPT16H, SSRP1 and RSF1. Interacts with isoform gamma of TP63. Interacts with FYTTD1/UIF. Interacts with SRF. Interacts with NEK9. Phosphorylated by CK2 following UV but not gamma irradiation. Phosphorylation inhibits its DNA-binding activity. Post-translationally, ubiquitinated. Polyubiquitinated following caspase cleavage resulting in degradation of the N-terminal ubiquitinated part of the cleaved protein. In terms of processing, sumoylated.

The protein resides in the nucleus. Its subcellular location is the chromosome. It is found in the nucleolus. Functionally, component of the FACT complex, a general chromatin factor that acts to reorganize nucleosomes. The FACT complex is involved in multiple processes that require DNA as a template such as mRNA elongation, DNA replication and DNA repair. During transcription elongation the FACT complex acts as a histone chaperone that both destabilizes and restores nucleosomal structure. It facilitates the passage of RNA polymerase II and transcription by promoting the dissociation of one histone H2A-H2B dimer from the nucleosome, then subsequently promotes the reestablishment of the nucleosome following the passage of RNA polymerase II. The FACT complex is probably also involved in phosphorylation of 'Ser-392' of p53/TP53 via its association with CK2 (casein kinase II). Binds specifically to double-stranded DNA and at low levels to DNA modified by the antitumor agent cisplatin. May potentiate cisplatin-induced cell death by blocking replication and repair of modified DNA. Also acts as a transcriptional coactivator for p63/TP63. In Rattus norvegicus (Rat), this protein is FACT complex subunit SSRP1 (Ssrp1).